The sequence spans 112 residues: MYRPTTTSYSPVYTGNPLYDISASQSDPRQRIRKNVRFQTEVDEFPDFDDSDSDELQFENRDPRKRIDPIKHMLLVQRLKRVSTSSRRLFIFTLSMFLIAFILLIAFVSFRD.

Ser51 and Ser53 each carry phosphoserine. A helical membrane pass occupies residues 90–110 (FIFTLSMFLIAFILLIAFVSF).

The protein resides in the golgi apparatus membrane. The protein localises to the endoplasmic reticulum membrane. This is an uncharacterized protein from Schizosaccharomyces pombe (strain 972 / ATCC 24843) (Fission yeast).